A 140-amino-acid chain; its full sequence is Cytochrome c oxidase subunit 6, mitochondrial (140 aa).

This sequence belongs to the cytochrome c oxidase subunit 5A family. Component of the cytochrome c oxidase (complex IV, CIV), a multisubunit enzyme composed of a catalytic core of 3 subunits and several supernumerary subunits. The complex exists as a monomer or a dimer and forms supercomplexes (SCs) in the inner mitochondrial membrane with ubiquinol-cytochrome c oxidoreductase (cytochrome b-c1 complex, complex III, CIII).

The protein localises to the mitochondrion inner membrane. It functions in the pathway energy metabolism; oxidative phosphorylation. Functionally, component of the cytochrome c oxidase, the last enzyme in the mitochondrial electron transport chain which drives oxidative phosphorylation. The respiratory chain contains 3 multisubunit complexes succinate dehydrogenase (complex II, CII), ubiquinol-cytochrome c oxidoreductase (cytochrome b-c1 complex, complex III, CIII) and cytochrome c oxidase (complex IV, CIV), that cooperate to transfer electrons derived from NADH and succinate to molecular oxygen, creating an electrochemical gradient over the inner membrane that drives transmembrane transport and the ATP synthase. Cytochrome c oxidase is the component of the respiratory chain that catalyzes the reduction of oxygen to water. Electrons originating from reduced cytochrome c in the intermembrane space (IMS) are transferred via the dinuclear copper A center (CU(A)) of subunit 2 and heme A of subunit 1 to the active site in subunit 1, a binuclear center (BNC) formed by heme A3 and copper B (CU(B)). The BNC reduces molecular oxygen to 2 water molecules using 4 electrons from cytochrome c in the IMS and 4 protons from the mitochondrial matrix. The chain is Cytochrome c oxidase subunit 6, mitochondrial (cox6) from Schizosaccharomyces pombe (strain 972 / ATCC 24843) (Fission yeast).